A 106-amino-acid chain; its full sequence is Antitoxin MazE3 (106 aa).

As to quaternary structure, forms a complex with cognate toxin MazF3, possibly with 1:1 stoichiometry.

Its function is as follows. Antitoxin component of a type II toxin-antitoxin (TA) system. Upon expression in E.coli and M.smegmatis neutralizes the effect of cognate toxin MazF3. Overexpression of MazE3 alone decreased persister cells formation in M.smegmatis upon challenge with gentamicin or kanamycin. In Mycobacterium tuberculosis (strain ATCC 25618 / H37Rv), this protein is Antitoxin MazE3 (mazE3).